The sequence spans 563 residues: MASSVLNLFKSCRPFTPIRFSSLPKSQFRIQFPLRPGKETQLRRCFTTLSSLTDGGAPISGGKELWLHNTMSRKKELFKPKVEGKVGMYVCGVTAYDLSHIGHARVYVTFDVLLRYLKHLGYEVSYVRNFTDVDDKIIARAKELEEDPISLSRRFCEEFNRDMEQLQCLDPSVQPRVSDHIPQIIDLIKQILDNGYAYKVDGDIYFSVDKFPTYGKLSGRKLEDNRAGERVAVDTRKKHPADFALWKAAKEGEPFWESPWGRGRPGWHIECSAMSAAYLGYSFDIHGGGMDLVFPHHENEIAQSCAACDSSNISYWIHNGFVTVDSEKMSKSLGNFFTIRQVIDLYHPLALRLFLMGTHYRSPINYSDFLLESASERIFYIYQTLHDCESALGEKDSTFENGSVPSDTLTSINTFRTEFVASMSDDLLTPVTLAAMSEPLKTINDLIHTRKGKKQARREESLKALETTIRDVLTILGLMPTSYSEVLEQLKEKALKRAGLKEEDVLQRVQERTDARKNKEYERSDAIRKDLAKVGIALMDSPEGTTWRPAIPLALQEPVTTTP.

Residue Cys91 participates in Zn(2+) binding. Gly92 contributes to the L-cysteine binding site. The short motif at 93–103 is the 'HIGH' region element; sequence VTAYDLSHIGH. Thr131 provides a ligand contact to L-cysteine. The short motif at 136–139 is the 'KIIK' region element; it reads KIIA. Positions 271, 296, and 300 each coordinate Zn(2+). Residue His296 participates in L-cysteine binding. The short motif at 328-332 is the 'KMSKS' region element; the sequence is KMSKS. Position 331 (Lys331) interacts with ATP.

This sequence belongs to the class-I aminoacyl-tRNA synthetase family. The cofactor is Zn(2+).

It localises to the plastid. It is found in the chloroplast. The protein localises to the mitochondrion. It carries out the reaction tRNA(Cys) + L-cysteine + ATP = L-cysteinyl-tRNA(Cys) + AMP + diphosphate. Required for female gametophyte development. Is necessary for the fusion of central cell nuclei and programmed cell death (PCD) of the antipodals. The chain is Cysteine--tRNA ligase, chloroplastic/mitochondrial from Arabidopsis thaliana (Mouse-ear cress).